A 251-amino-acid chain; its full sequence is CDP-diacylglycerol pyrophosphatase (251 aa).

A helical transmembrane segment spans residues A4–W24.

This sequence belongs to the Cdh family.

Its subcellular location is the cell inner membrane. The enzyme catalyses a CDP-1,2-diacyl-sn-glycerol + H2O = a 1,2-diacyl-sn-glycero-3-phosphate + CMP + 2 H(+). Its pathway is phospholipid metabolism; CDP-diacylglycerol degradation; phosphatidate from CDP-diacylglycerol: step 1/1. The protein is CDP-diacylglycerol pyrophosphatase of Escherichia coli O127:H6 (strain E2348/69 / EPEC).